We begin with the raw amino-acid sequence, 146 residues long: MORN repeat-containing protein 4 (146 aa).

4 MORN repeats span residues 16-38 (YRGE…DGGT), 39-61 (YLGH…DGSR), 62-84 (YEGE…DNMT), and 85-107 (FEGE…DGSH).

In terms of assembly, interacts with MYO3A.

The protein resides in the cytoplasm. Its subcellular location is the cell projection. It is found in the filopodium tip. The protein localises to the stereocilium. Plays a role in promoting axonal degeneration following neuronal injury by toxic insult or trauma. The sequence is that of MORN repeat-containing protein 4 (Morn4) from Rattus norvegicus (Rat).